A 499-amino-acid polypeptide reads, in one-letter code: MENRNSSTSSRPFSVNNPFRNATVDSSINQYKNDSQFQEWAKNQSRTNSFDMPQLNTRTSSQLSFPNIPEDEPQRNADQQGAFYSGLESFSSGSLSPPSRPLSSKNPFLDDVSSATDFRRSPPPVSRNKNHPTAKEEKEQLRQRYLEESDVSTVGNTRENTDLPPSYEEITSTNGSRRAYPKEKVSRPSSHREHSNSGTYISRRSSSHHHREASSSSTPSKKGKRKSKVIVPKNVDTIDKLDVTGLFGGSFHHDGPFDAVTPHRNKNNKAAPVLAFPVDGPNSTIGGASTKKSALDEVFGRDDTDDSDIYQYSSQTLRRGGDTQDAIKANVGNVQQMDAKNKTELVHGPVTAGLGSSTFLDGAPASSAAIRNDIKAHSYHNRNGGLQRNKSLSQRLGLGGSGDSNAPMTGVRRNLSLSRDNYDVGHSNEGVRRSKTVNSPNRTHKSNYTTDFDGQDDHNEDEEDVYLGVRYNEPNMKKKSTGSKLLSRVKSLKVGRKSQ.

Residues 1–65 (MENRNSSTSS…NTRTSSQLSF (65 aa)) show a composition bias toward polar residues. The disordered stretch occupies residues 1-232 (MENRNSSTSS…GKRKSKVIVP (232 aa)). Phosphoserine occurs at positions 14 and 45. Thr-47 is modified (phosphothreonine). Ser-49 and Ser-64 each carry phosphoserine. Residues 85 to 104 (SGLESFSSGSLSPPSRPLSS) show a composition bias toward low complexity. Phosphoserine is present on residues Ser-114 and Ser-121. Residues 133 to 147 (TAKEEKEQLRQRYLE) show a composition bias toward basic and acidic residues. Residues Lys-135 and Lys-138 each participate in a glycyl lysine isopeptide (Lys-Gly) (interchain with G-Cter in ubiquitin) cross-link. Thr-153 carries the post-translational modification Phosphothreonine. The span at 180–195 (YPKEKVSRPSSHREHS) shows a compositional bias: basic and acidic residues. A Glycyl lysine isopeptide (Lys-Gly) (interchain with G-Cter in ubiquitin) cross-link involves residue Lys-292. Residue Thr-304 is modified to Phosphothreonine. A Phosphoserine modification is found at Ser-307. Residues Lys-328 and Lys-445 each participate in a glycyl lysine isopeptide (Lys-Gly) (interchain with G-Cter in ubiquitin) cross-link. Residues 379 to 499 (YHNRNGGLQR…KSLKVGRKSQ (121 aa)) form a disordered region. A compositionally biased stretch (polar residues) spans 436 to 452 (TVNSPNRTHKSNYTTDF). The segment covering 490–499 (KSLKVGRKSQ) has biased composition (basic residues).

Belongs to the pal1 family. Interacts with EDE1.

The protein localises to the cell membrane. In terms of biological role, involved in the early step of endocytosis. The protein is Protein PAL1 (PAL1) of Saccharomyces cerevisiae (strain ATCC 204508 / S288c) (Baker's yeast).